The primary structure comprises 256 residues: tRNA pseudouridine synthase A (256 aa).

The active-site Nucleophile is aspartate 52. Tyrosine 111 is a substrate binding site.

It belongs to the tRNA pseudouridine synthase TruA family. Homodimer.

It carries out the reaction uridine(38/39/40) in tRNA = pseudouridine(38/39/40) in tRNA. In terms of biological role, formation of pseudouridine at positions 38, 39 and 40 in the anticodon stem and loop of transfer RNAs. This is tRNA pseudouridine synthase A from Paramagnetospirillum magneticum (strain ATCC 700264 / AMB-1) (Magnetospirillum magneticum).